The primary structure comprises 102 residues: RxLR effector protein PexRD41 (102 aa).

The N-terminal stretch at 1–21 (MRSIFYFALAFAALTCSNASA) is a signal peptide. The RxLR-dEER motif lies at 39 to 53 (RSLRVAGQEAARGEE).

Belongs to the RxLR effector family. As to quaternary structure, interacts with host KRBP1.

It localises to the secreted. It is found in the host cytoplasm. Its subcellular location is the host nucleus. The protein localises to the host nucleolus. In terms of biological role, effector that enhances P.infestans colonization of host plant leaves. During the early stages of P.infestans infection, interacts with and stabilizes host potato K-homology (KH) RNA-binding protein KRBP1, leading to its accumulation. This Phytophthora infestans (strain T30-4) (Potato late blight agent) protein is RxLR effector protein PexRD41.